A 282-amino-acid chain; its full sequence is MIVSGLSGSGKSVALKTFEDLDYYCSDNLPVELLPDFVKSRLRGNPVGDQRLAVGIDVRSRSDLTQLAQWRQAAQEYGIEARLLFFEASDEALIKRYADTRRRHPLSHLGLALPEAITRERQLTEPLRTQADAVIDTSTLNVHQLRRRVVTEFALGSHDRLSLLFESFAYKRGVPAEADFVFDARVLPNPHWDPELRPLTGRDAGVREYLDNEADVQRYSAQIVDLLDTWLPRLRNDTRSYVTIAFGCTGGKHRSVYMAERMARHAREQGWPEVATFHREQD.

Glycine 5–serine 12 serves as a coordination point for ATP. Residue aspartate 57–serine 60 participates in GTP binding.

It belongs to the RapZ-like family.

Its function is as follows. Displays ATPase and GTPase activities. The protein is Nucleotide-binding protein XAC2976 of Xanthomonas axonopodis pv. citri (strain 306).